A 96-amino-acid chain; its full sequence is UPF0235 protein YPN_3141 (96 aa).

The protein belongs to the UPF0235 family.

This chain is UPF0235 protein YPN_3141, found in Yersinia pestis bv. Antiqua (strain Nepal516).